An 83-amino-acid polypeptide reads, in one-letter code: uncharacterized protein (83 aa).

This is an uncharacterized protein from Lactuca sativa (Garden lettuce).